We begin with the raw amino-acid sequence, 353 residues long: Methylthioribose-1-phosphate isomerase (353 aa).

Substrate contacts are provided by residues 51 to 53 (RGA), Arg94, and Gln199. The active-site Proton donor is the Asp240. Residue 250–251 (NK) coordinates substrate.

This sequence belongs to the eIF-2B alpha/beta/delta subunits family. MtnA subfamily. Homodimer.

The catalysed reaction is 5-(methylsulfanyl)-alpha-D-ribose 1-phosphate = 5-(methylsulfanyl)-D-ribulose 1-phosphate. It participates in amino-acid biosynthesis; L-methionine biosynthesis via salvage pathway; L-methionine from S-methyl-5-thio-alpha-D-ribose 1-phosphate: step 1/6. In terms of biological role, catalyzes the interconversion of methylthioribose-1-phosphate (MTR-1-P) into methylthioribulose-1-phosphate (MTRu-1-P). This is Methylthioribose-1-phosphate isomerase from Bacillus velezensis (strain DSM 23117 / BGSC 10A6 / LMG 26770 / FZB42) (Bacillus amyloliquefaciens subsp. plantarum).